The following is a 609-amino-acid chain: Major facilitator superfamily domain-containing protein 6-like protein A (609 aa).

Transmembrane regions (helical) follow at residues 41–61 and 78–98; these read LGLGAPLVGIIFGFKHAVHLL and FFIMTSLLLSAGVGSLFAYYP. The segment at 201 to 241 is disordered; it reads SGKAQKVMSSKSAASNSKQRSSLNNHTSPYATHPNVSHHPS. Over residues 207–230 the composition is skewed to polar residues; it reads VMSSKSAASNSKQRSSLNNHTSPY. 9 helical membrane-spanning segments follow: residues 265-285, 307-327, 340-360, 388-408, 420-440, 452-472, 475-495, 513-535, and 541-561; these read IFLIVLVLVIIWEILAAPLEW, LWIWGYLGASMGSIFITFLVD, VFFHFFCYGGFLIGTLFLSTL, IVLTALTVFLLGAVGSTTQNF, ELYMGLSIAVGLLSELTLYFF, WMVALGLFSLGVQCLYYSFLW, WSVLAIQILNAFSSGVIWWAI, LALRWLAYGCGSSTGSFASGFII, and AVLYQACCITLLLWIIIFLLV.

This sequence belongs to the major facilitator superfamily. MFSD6 family.

The protein localises to the membrane. The protein is Major facilitator superfamily domain-containing protein 6-like protein A (mfsd6l-a) of Xenopus laevis (African clawed frog).